We begin with the raw amino-acid sequence, 123 residues long: Putative iron-sulfur cluster insertion protein ErpA (123 aa).

Iron-sulfur cluster is bound by residues cysteine 51, cysteine 115, and cysteine 117.

Belongs to the HesB/IscA family. In terms of assembly, homodimer. The cofactor is iron-sulfur cluster.

In terms of biological role, required for insertion of 4Fe-4S clusters. The sequence is that of Putative iron-sulfur cluster insertion protein ErpA from Bordetella avium (strain 197N).